The sequence spans 456 residues: Bifunctional protein GlmU (456 aa).

Residues 1–229 (MTKKALSAVI…VMEVEGANNR (229 aa)) form a pyrophosphorylase region. Residues 11–14 (LAAG), K25, Q76, 81–82 (GT), 103–105 (YGD), G140, E154, N169, and N227 contribute to the UDP-N-acetyl-alpha-D-glucosamine site. Mg(2+) is bound at residue D105. Mg(2+) is bound at residue N227. The segment at 230 to 250 (LQLAALERYLQNKQASKLLLE) is linker. The segment at 251-456 (GVMIYDPARF…QGWQRPIKKK (206 aa)) is N-acetyltransferase. 2 residues coordinate UDP-N-acetyl-alpha-D-glucosamine: R333 and K351. H363 functions as the Proton acceptor in the catalytic mechanism. Positions 366 and 377 each coordinate UDP-N-acetyl-alpha-D-glucosamine. Residues A380, 386-387 (NY), S405, A423, and R440 each bind acetyl-CoA.

This sequence in the N-terminal section; belongs to the N-acetylglucosamine-1-phosphate uridyltransferase family. It in the C-terminal section; belongs to the transferase hexapeptide repeat family. In terms of assembly, homotrimer. Requires Mg(2+) as cofactor.

It is found in the cytoplasm. It catalyses the reaction alpha-D-glucosamine 1-phosphate + acetyl-CoA = N-acetyl-alpha-D-glucosamine 1-phosphate + CoA + H(+). It carries out the reaction N-acetyl-alpha-D-glucosamine 1-phosphate + UTP + H(+) = UDP-N-acetyl-alpha-D-glucosamine + diphosphate. It functions in the pathway nucleotide-sugar biosynthesis; UDP-N-acetyl-alpha-D-glucosamine biosynthesis; N-acetyl-alpha-D-glucosamine 1-phosphate from alpha-D-glucosamine 6-phosphate (route II): step 2/2. Its pathway is nucleotide-sugar biosynthesis; UDP-N-acetyl-alpha-D-glucosamine biosynthesis; UDP-N-acetyl-alpha-D-glucosamine from N-acetyl-alpha-D-glucosamine 1-phosphate: step 1/1. The protein operates within bacterial outer membrane biogenesis; LPS lipid A biosynthesis. Catalyzes the last two sequential reactions in the de novo biosynthetic pathway for UDP-N-acetylglucosamine (UDP-GlcNAc). The C-terminal domain catalyzes the transfer of acetyl group from acetyl coenzyme A to glucosamine-1-phosphate (GlcN-1-P) to produce N-acetylglucosamine-1-phosphate (GlcNAc-1-P), which is converted into UDP-GlcNAc by the transfer of uridine 5-monophosphate (from uridine 5-triphosphate), a reaction catalyzed by the N-terminal domain. The polypeptide is Bifunctional protein GlmU (Haemophilus influenzae (strain PittEE)).